A 210-amino-acid chain; its full sequence is ATP-dependent Clp protease proteolytic subunit (210 aa).

Ser111 (nucleophile) is an active-site residue. Residue His136 is part of the active site.

It belongs to the peptidase S14 family. Fourteen ClpP subunits assemble into 2 heptameric rings which stack back to back to give a disk-like structure with a central cavity, resembling the structure of eukaryotic proteasomes.

The protein localises to the cytoplasm. It catalyses the reaction Hydrolysis of proteins to small peptides in the presence of ATP and magnesium. alpha-casein is the usual test substrate. In the absence of ATP, only oligopeptides shorter than five residues are hydrolyzed (such as succinyl-Leu-Tyr-|-NHMec, and Leu-Tyr-Leu-|-Tyr-Trp, in which cleavage of the -Tyr-|-Leu- and -Tyr-|-Trp bonds also occurs).. Its function is as follows. Cleaves peptides in various proteins in a process that requires ATP hydrolysis. Has a chymotrypsin-like activity. Plays a major role in the degradation of misfolded proteins. This is ATP-dependent Clp protease proteolytic subunit from Halorhodospira halophila (strain DSM 244 / SL1) (Ectothiorhodospira halophila (strain DSM 244 / SL1)).